The sequence spans 213 residues: Protein Pars_0011 (213 aa).

One can recognise an AMMECR1 domain in the interval 8–201; the sequence is EEGRYLVKLA…EREPNEEVYQ (194 aa).

This is Protein Pars_0011 from Pyrobaculum arsenaticum (strain DSM 13514 / JCM 11321 / PZ6).